Here is a 303-residue protein sequence, read N- to C-terminus: MSFTTTVKEELIHLSASDQTELSAIIKLAGSLGLANQSLNLSITTENAKIARYIYALIEDTYHIIPEIKYHQKTNLKKNRVYTVYLDKQVDKLLADLKLADSFFGIETGIEQQVMSDDDAGRAYLKGAFLAAGTVRDPESGKYQLEIYSVYLDHAQDLAQLMHKFMLDAKVIERKNGAVTYLQKAEDIMDFLIIIGAMSCKEEFEAVKLLREARNDINRANNAETANIAKTITASMRTINNIIKIMDTIGLDSLPVELQQIAQMRVANPDYSLQQIADSLDFAITKSGVNHRLRKINKLAEDL.

Residues 272-303 constitute a DNA-binding region (H-T-H motif); the sequence is SLQQIADSLDFAITKSGVNHRLRKINKLAEDL.

This sequence belongs to the WhiA family.

Its function is as follows. Involved in cell division and chromosome segregation. The sequence is that of Probable cell division protein WhiA from Streptococcus equi subsp. zooepidemicus (strain MGCS10565).